A 362-amino-acid polypeptide reads, in one-letter code: Protein MGF 360-2L (362 aa).

The protein belongs to the asfivirus MGF 360 family.

In terms of biological role, plays a role in virus cell tropism, and may be required for efficient virus replication in macrophages. The sequence is that of Protein MGF 360-2L from African swine fever virus (strain Badajoz 1971 Vero-adapted) (Ba71V).